The sequence spans 369 residues: Probable dual-specificity RNA methyltransferase RlmN (369 aa).

Glu-108 (proton acceptor) is an active-site residue. In terms of domain architecture, Radical SAM core spans 114 to 351; that stretch reads YPDRATLCIS…LAQGVSCTVR (238 aa). An intrachain disulfide couples Cys-121 to Cys-362. The [4Fe-4S] cluster site is built by Cys-128, Cys-132, and Cys-135. Residues 183–184, Ser-217, 240–242, and Asn-319 contribute to the S-adenosyl-L-methionine site; these read GE and SLH. Catalysis depends on Cys-362, which acts as the S-methylcysteine intermediate.

Belongs to the radical SAM superfamily. RlmN family. The cofactor is [4Fe-4S] cluster.

It localises to the cytoplasm. It carries out the reaction adenosine(2503) in 23S rRNA + 2 reduced [2Fe-2S]-[ferredoxin] + 2 S-adenosyl-L-methionine = 2-methyladenosine(2503) in 23S rRNA + 5'-deoxyadenosine + L-methionine + 2 oxidized [2Fe-2S]-[ferredoxin] + S-adenosyl-L-homocysteine. It catalyses the reaction adenosine(37) in tRNA + 2 reduced [2Fe-2S]-[ferredoxin] + 2 S-adenosyl-L-methionine = 2-methyladenosine(37) in tRNA + 5'-deoxyadenosine + L-methionine + 2 oxidized [2Fe-2S]-[ferredoxin] + S-adenosyl-L-homocysteine. Its function is as follows. Specifically methylates position 2 of adenine 2503 in 23S rRNA and position 2 of adenine 37 in tRNAs. In Rhodococcus jostii (strain RHA1), this protein is Probable dual-specificity RNA methyltransferase RlmN.